The following is a 929-amino-acid chain: DVEIFAVGVKDAVRSELEAIATPPTATHVYTVEDFDAFQRISFELTQSIWLRIEQELKSIKVKSLTPPRDLSFAEVTSSSFRVSWSPAAEDAIAYLVNYTVALGGEEFVVSVPAPTTSTVLTNLFPKTTYEVRVVAEYPEGESPPLKGEETTLEVRGAPRNLRVTDETTDSFKVGWTPAPGNVLRYRIAYRPVAGGERKEVTVQGNERATTLYNLFPDTKYHVSGVPEYQSGPGTALNGNGATEEVVGEPKNLRVSEPTTSTAMRLTWDKAPGKVQRYLRNLHSRSAGGDIKEVTVKGDTSTTVLKELDPGTAYTLSVNPLYASGAGTAVTGEGATLQERGSPRDLIIKDITDTTIGTSWTAAPGMVRGYRIAWQSLFDDKTGENHVPGDTTNTVLRNLDPETKYRLSVYANYASGEGDPLSGEATTEASPDGKIVKISEETETTMKATWQPAPGNVLNYRVVYRPRAGGRQIVAKVPPAVTSTVLRRLTPLTTYDISVIPVYKEGDGKTRQGSGTTLSPFNAPRSIKTSEPTRSTFRVTWEPAPGEVKGYKITFHPEGDDGYLGEMMVGPYDSTVVLEELRARTSYKVNVFGVFDDGQSPPLIGHETTTLRDAPRSPIPSSGLDCTTKAQADIVLLVDGSWSIGRPNFKIVRNFISRVVEVFDIGSDRVQIAVSQYSGDPRTEWQLNTHKTKKSLMDAVANLPYKGGNTNTGSALKFILENNFRPGVGMREKARKIAILLTDGKSQDDIVAPSKRYADEGIELYAVGIKNADENELKEIASDPDELYMYNVADFSLLTNIVNDLTENVCNSVKGPGGLNPPSNLVTSEPTPRSFRVTWVPPSQSVERFKVEYYPVAGGRPQEVYVRGTQTTTVLVGLKPETEYYVNVYSVEGNEISEPLAGTETTLPIPSVRNMNLYDIGTTTMRVKW.

The 49-residue stretch at 1–49 (DVEIFAVGVKDAVRSELEAIATPPTATHVYTVEDFDAFQRISFELTQSI) folds into the VWFA 1 domain. 6 consecutive Fibronectin type-III domains span residues 67–156 (PPRD…LEVR), 158–250 (APRN…VGEP), 251–340 (KNLR…LQER), 342–432 (SPRD…ASPD), 434–521 (KIVK…LSPF), and 523–613 (APRS…TLRD). N-linked (GlcNAc...) asparagine glycosylation is present at asparagine 98. 3 O-linked (Xyl...) (chondroitin sulfate) serine glycosylation sites follow: serine 231, serine 324, and serine 415. The 173-residue stretch at 633–805 (DIVLLVDGSW…SLLTNIVNDL (173 aa)) folds into the VWFA 2 domain. Residues 821-910 (PPSNLVTSEP…AGTETTLPIP (90 aa)) form the Fibronectin type-III 7 domain.

It belongs to the fibril-associated collagens with interrupted helices (FACIT) family. Trimer of identical chains each containing 190 kDa of non-triple-helical sequences. In terms of processing, the triple-helical tail is stabilized by disulfide bonds at each end. Post-translationally, prolines at the third position of the tripeptide repeating unit (G-X-Y) are hydroxylated in some or all of the chains.

The protein localises to the secreted. The protein resides in the extracellular space. It is found in the extracellular matrix. In terms of biological role, type XII collagen interacts with type I collagen-containing fibrils, the COL1 domain could be associated with the surface of the fibrils, and the COL2 and NC3 domains may be localized in the perifibrillar matrix. Could play a developmental role in regeneration. This Notophthalmus viridescens (Eastern newt) protein is Collagen alpha-1(XII) chain.